The sequence spans 380 residues: Succinyl-diaminopimelate desuccinylase (380 aa).

H69 lines the Zn(2+) pocket. D71 is an active-site residue. A Zn(2+)-binding site is contributed by D102. E135 functions as the Proton acceptor in the catalytic mechanism. The Zn(2+) site is built by E136, E164, and H353.

This sequence belongs to the peptidase M20A family. DapE subfamily. Homodimer. It depends on Zn(2+) as a cofactor. The cofactor is Co(2+).

It catalyses the reaction N-succinyl-(2S,6S)-2,6-diaminopimelate + H2O = (2S,6S)-2,6-diaminopimelate + succinate. It functions in the pathway amino-acid biosynthesis; L-lysine biosynthesis via DAP pathway; LL-2,6-diaminopimelate from (S)-tetrahydrodipicolinate (succinylase route): step 3/3. Catalyzes the hydrolysis of N-succinyl-L,L-diaminopimelic acid (SDAP), forming succinate and LL-2,6-diaminopimelate (DAP), an intermediate involved in the bacterial biosynthesis of lysine and meso-diaminopimelic acid, an essential component of bacterial cell walls. This Ruegeria pomeroyi (strain ATCC 700808 / DSM 15171 / DSS-3) (Silicibacter pomeroyi) protein is Succinyl-diaminopimelate desuccinylase.